A 107-amino-acid chain; its full sequence is UPF0045 protein in glkA 3'region (107 aa).

The protein belongs to the UPF0045 family.

The protein is UPF0045 protein in glkA 3'region (dglA) of Staphylococcus xylosus.